A 425-amino-acid polypeptide reads, in one-letter code: Histidine--tRNA ligase (425 aa).

The protein belongs to the class-II aminoacyl-tRNA synthetase family. Homodimer.

Its subcellular location is the cytoplasm. It carries out the reaction tRNA(His) + L-histidine + ATP = L-histidyl-tRNA(His) + AMP + diphosphate + H(+). The protein is Histidine--tRNA ligase of Shewanella sp. (strain W3-18-1).